The sequence spans 286 residues: Interferon-induced 35 kDa protein (286 aa).

A leucine-zipper region spans residues 5–26 (LDAALHALQEEQARLKMRLWDL). NID domains follow at residues 81–170 (ALIT…GDVD) and 183–266 (FARD…GEVE).

Belongs to the NMI family. Homodimer. Also interacts with BATF. Interacts with TRIM21. Interacts with NMI; the interaction is direct and is facilitated by TRIM21. Phosphorylated. Dephosphorylation correlates with the formation of a complex with NMI. As to expression, expressed in a wide range of cell types, including fibroblasts, macrophages, and epithelial cells.

The protein resides in the cytoplasm. It is found in the nucleus. The protein localises to the secreted. In terms of biological role, acts as a signaling pathway regulator involved in innate immune system response. In response to interferon IFN-alpha, associates in a complex with signaling pathway regulator NMI to regulate immune response; the complex formation prevents proteasome-mediated degradation of IFI35 and correlates with IFI35 dephosphorylation. In complex with NMI, inhibits virus-triggered type I interferon/IFN-beta production. In complex with NMI, negatively regulates nuclear factor NF-kappa-B signaling by inhibiting the nuclear translocation, activation and transcription of the NF-kappa-B subunit p65/RELA, resulting in the inhibition of endothelial cell proliferation, migration and re-endothelialization of injured arteries. Beside its role as an intracellular signaling pathway regulator, also functions extracellularly as damage-associated molecular patterns (DAMPs) to promote inflammation when actively released by macrophage to the extracellular space during cell injury and pathogen invasion. Macrophage-secreted IFI35 activates NF-kappa-B signaling in adjacent macrophages through Toll-like receptor 4/TLR4 activation, thereby inducing NF-kappa-B translocation from the cytoplasm into the nucleus which promotes the release of pro-inflammatory cytokines. The polypeptide is Interferon-induced 35 kDa protein (Homo sapiens (Human)).